The sequence spans 376 residues: Homoserine dehydrogenase (376 aa).

The NADP(+) site is built by asparagine 17 and isoleucine 18. Position 18 (isoleucine 18) interacts with NAD(+). Residues isoleucine 18, lysine 67, threonine 99, and lysine 123 each coordinate NADPH. Threonine 99 and lysine 123 together coordinate NADP(+). Threonine 99 is an NAD(+) binding site. Residues glutamate 150, valine 153, alanine 155, and leucine 157 each coordinate Na(+). At serine 201 the chain carries Phosphoserine. NADP(+) contacts are provided by glycine 213 and glutamate 216. L-homoserine is bound by residues glutamate 216 and aspartate 227. The active-site Proton donor is the lysine 231. Glycine 349 lines the NADP(+) pocket. Glycine 349 lines the NAD(+) pocket. NADPH is bound at residue glycine 349.

This sequence belongs to the homoserine dehydrogenase family. A metal cation is required as a cofactor.

The catalysed reaction is L-homoserine + NADP(+) = L-aspartate 4-semialdehyde + NADPH + H(+). It carries out the reaction L-homoserine + NAD(+) = L-aspartate 4-semialdehyde + NADH + H(+). It functions in the pathway amino-acid biosynthesis; L-methionine biosynthesis via de novo pathway; L-homoserine from L-aspartate: step 3/3. The protein operates within amino-acid biosynthesis; L-threonine biosynthesis; L-threonine from L-aspartate: step 3/5. Catalyzes the conversion of L-aspartate-beta-semialdehyde (L-Asa) to L-homoserine (L-Hse), the third step in the biosynthesis of amino acids that derive from aspartate (the aspartate family of amino acids), including methioinine and threonine, the latter of which is a precursor to isoleucine; production of homoserine leads to a branch-point in the pathway as it can either be O-phosphorylated for processing to threonine, or O-acylated for processing to methionine. This is Homoserine dehydrogenase from Schizosaccharomyces pombe (strain 972 / ATCC 24843) (Fission yeast).